We begin with the raw amino-acid sequence, 408 residues long: Glyceraldehyde-3-phosphate dehydrogenase, testis-specific (408 aa).

The testis-specific N-terminal extension stretch occupies residues 1–73; it reads MSKRDIVLTN…TPPPKMVSVA (73 aa). The interval 19 to 68 is disordered; sequence QPCPVTRAPPPPEPKAEVEPQPQPEPTPVREEIKPPPPPLPPHPATPPPK. Over residues 53–68 the composition is skewed to pro residues; the sequence is PPPPPLPPHPATPPPK. Residues 85–86, D106, K151, Y173, and S193 each bind NAD(+); that span reads RI. Residues 223–225, T254, 283–284, and R306 contribute to the D-glyceraldehyde 3-phosphate site; these read SCT and TG. C224 serves as the catalytic Nucleophile. N388 serves as a coordination point for NAD(+).

The protein belongs to the glyceraldehyde-3-phosphate dehydrogenase family. As to quaternary structure, homotetramer. Interacts with ARRB2; the interaction is detected in the nucleus upon OR1D2 stimulation. As to expression, testis specific.

It is found in the cytoplasm. It catalyses the reaction D-glyceraldehyde 3-phosphate + phosphate + NAD(+) = (2R)-3-phospho-glyceroyl phosphate + NADH + H(+). It functions in the pathway carbohydrate degradation; glycolysis; pyruvate from D-glyceraldehyde 3-phosphate: step 1/5. May play an important role in regulating the switch between different pathways for energy production during spermiogenesis and in the spermatozoon. Required for sperm motility and male fertility. The sequence is that of Glyceraldehyde-3-phosphate dehydrogenase, testis-specific (GAPDHS) from Homo sapiens (Human).